Here is a 1024-residue protein sequence, read N- to C-terminus: MSSMKSVSALDNVVVKSPNDRRLYRVIELENGLCALLIHDPDIYPEGSVPDQIDEDDEDGEEEDSDGSSEDDDDDEDDEEDGEGDEEDEDEDEDEVKGKGDHQTKKAAAAMCVSMGSFLDPPEAQGLAHFLEHMLFMGSTEFPDENEYDSYLSKHGGSSNAYTEMEHTCYHFEVKREFLQGALKRFSQFFVAPLMKTEAMEREVLAVDSEFNQALQNDACRLQQLQCYTSAKGHPFNRFAWGNKKSLSGAMENGVDLRECIVKLYKEYYHGGLMKLVVIGGESLDMLESWVVELFGDVKNGSKIRPTLEAEGPIWKGGKLYRLEAVKDVHILDLTWTLPPLRSAYVKKPEDYLAHLLGHEGRGSLHSFLKAKGWATSLSAGVGDDGINRSSLAYVFGMSIHLTDSGLEKIYDIIGYIYQYLKLLRDVSPQEWIFKELQDIGNMDFRFAEEQPADDYAAELSENMLAYPVEHVIYGDYVYQTWDPKLIEDLMGFFTPQNMRIDVVSKSIKSEEFQQEPWFGSSYIEEDVPLSLMESWSNPSEVDNSLHLPSKNQFIPCDFSIRAINSDVDPKSQSPPRCIIDEPFMKFWYKLDETFKVPRANTYFRINLKGAYASVKNCLLTELYINLLKDELNEIIYQASIAKLETSLSMYGDKLELKVYGFNEKIPALLSKILAIAKSFMPNLERFKVIKENMERGFRNTNMKPLNHSTYLRLQLLCKRIYDSDEKLSVLNDLSLDDLNSFIPELRSQIFIEALCHGNLSEDEAVNISNIFKDSLTVEPLPSKCRHGEQITCFPMGAKLVRDVNVKNKSETNSVVELYYQIEPEEAQSTRTKAVLDLFHEIIEEPLFNQLRTKEQLGYVVECGPRLTYRVHGFCFCVQSSKYGPVHLLGRVDNFIKDIEGLLEQLDDESYEDYRSGMIARLLEKDPSLLSETNDLWSQIVDKRYMFDFSHKEAEELRSIQKKDVISWYKTYFRESSPKCRRLAVRVWGCDTNMKETQTDQKAVQVIADAVAFKSTSKFYPSLC.

Positions 41-103 (PDIYPEGSVP…DEVKGKGDHQ (63 aa)) are disordered. Residues 52 to 95 (QIDEDDEDGEEEDSDGSSEDDDDDEDDEEDGEGDEEDEDEDEDE) show a composition bias toward acidic residues. Residue histidine 129 coordinates Zn(2+). The active-site Proton acceptor is the glutamate 132. Position 133 (histidine 133) interacts with Zn(2+). Glutamate 203 is a catalytic residue. Zn(2+) is bound at residue glutamate 210.

It belongs to the peptidase M16 family. Zn(2+) serves as cofactor.

The enzyme catalyses Hydrolysis of polypeptides, preferably at -Xaa-|-Arg-Lys-, and less commonly at -Arg-|-Arg-Xaa-, in which Xaa is not Arg or Lys.. Functionally, cleaves peptide substrates on the N-terminus of arginine residues in dibasic pairs. This is Nardilysin-like from Arabidopsis thaliana (Mouse-ear cress).